A 167-amino-acid polypeptide reads, in one-letter code: MAKGGVKKAAAAAARAAANRLMADNRQARHQYEILETLETGIELVGTEVKSIRNGKANLRDGFCLIRNGELQLHNVHISPHSHASAYFNHDPLRTRKLLAHRREIDKLRGQLDKKGLALIPLNIHLKGSWIKITIGVGKGRKLHDKRAADKEKQSKKEVRSAMAKYQ.

Positions H144–Q167 are disordered. A compositionally biased stretch (basic and acidic residues) spans K146–R160.

It belongs to the SmpB family.

Its subcellular location is the cytoplasm. In terms of biological role, required for rescue of stalled ribosomes mediated by trans-translation. Binds to transfer-messenger RNA (tmRNA), required for stable association of tmRNA with ribosomes. tmRNA and SmpB together mimic tRNA shape, replacing the anticodon stem-loop with SmpB. tmRNA is encoded by the ssrA gene; the 2 termini fold to resemble tRNA(Ala) and it encodes a 'tag peptide', a short internal open reading frame. During trans-translation Ala-aminoacylated tmRNA acts like a tRNA, entering the A-site of stalled ribosomes, displacing the stalled mRNA. The ribosome then switches to translate the ORF on the tmRNA; the nascent peptide is terminated with the 'tag peptide' encoded by the tmRNA and targeted for degradation. The ribosome is freed to recommence translation, which seems to be the essential function of trans-translation. This is SsrA-binding protein from Synechococcus sp. (strain CC9902).